We begin with the raw amino-acid sequence, 339 residues long: DNA-directed RNA polymerase subunit alpha (339 aa).

Residues 1–237 (MENELMYMNW…EQMNVFINFD (237 aa)) are alpha N-terminal domain (alpha-NTD). The tract at residues 256 to 339 (FNENLYRSVN…PPAEDNKEGE (84 aa)) is alpha C-terminal domain (alpha-CTD).

Belongs to the RNA polymerase alpha chain family. As to quaternary structure, homodimer. The RNAP catalytic core consists of 2 alpha, 1 beta, 1 beta' and 1 omega subunit. When a sigma factor is associated with the core the holoenzyme is formed, which can initiate transcription.

The catalysed reaction is RNA(n) + a ribonucleoside 5'-triphosphate = RNA(n+1) + diphosphate. Its function is as follows. DNA-dependent RNA polymerase catalyzes the transcription of DNA into RNA using the four ribonucleoside triphosphates as substrates. The protein is DNA-directed RNA polymerase subunit alpha of Desulfosudis oleivorans (strain DSM 6200 / JCM 39069 / Hxd3) (Desulfococcus oleovorans).